The sequence spans 339 residues: Protein RETICULATA-RELATED 2, chloroplastic (339 aa).

The transit peptide at 1-58 (MAAMAAKLHISTKSDQSNVRLPRLINLSRDPTARVLFPRNGSVSSLHTNFSSPNIMVP) directs the protein to the chloroplast. Residues 68–86 (IGNHGGGSGSGGGGGGYGG) are compositionally biased toward gly residues. The segment at 68-92 (IGNHGGGSGSGGGGGGYGGSEEEES) is disordered. The next 2 helical transmembrane spans lie at 148 to 168 (FVFSTLVVGSILNFTLMYLLA) and 213 to 233 (VFATVGLAAGLVGTAISNGLI).

It belongs to the RETICULATA family.

The protein localises to the plastid. It is found in the chloroplast membrane. May play a role in leaf development. This is Protein RETICULATA-RELATED 2, chloroplastic from Arabidopsis thaliana (Mouse-ear cress).